The primary structure comprises 428 residues: C4-dicarboxylate transport protein (428 aa).

The next 8 membrane-spanning stretches (helical) occupy residues 8–28, 44–64, 78–98, 148–168, 184–204, 222–242, 307–327, and 355–375; these read VLYV…HLYP, LIKM…IAGM, LLYF…ATHI, GEIL…AHLG, VLFG…FGAM, LIGT…GAIA, IYMT…LTWM, and AATL…ILGI.

It belongs to the dicarboxylate/amino acid:cation symporter (DAACS) (TC 2.A.23) family.

The protein resides in the cell inner membrane. Responsible for the transport of dicarboxylates such as succinate, fumarate, and malate from the periplasm across the membrane. This chain is C4-dicarboxylate transport protein, found in Burkholderia thailandensis (strain ATCC 700388 / DSM 13276 / CCUG 48851 / CIP 106301 / E264).